The following is a 68-amino-acid chain: Large ribosomal subunit protein bL32 (68 aa).

Belongs to the bacterial ribosomal protein bL32 family.

This Aster yellows witches'-broom phytoplasma (strain AYWB) protein is Large ribosomal subunit protein bL32.